The chain runs to 692 residues: Junctophilin-2 (692 aa).

Residues methionine 1 to threonine 670 are Cytoplasmic-facing. MORN repeat units lie at residues tyrosine 14–glycine 36, tyrosine 38–threonine 59, phenylalanine 60–arginine 79, tyrosine 82–alanine 104, tyrosine 106–threonine 128, and tyrosine 129–methionine 151. A phosphoserine mark is found at serine 162 and serine 165. Disordered stretches follow at residues serine 164–proline 190 and leucine 246–phenylalanine 273. MORN repeat units follow at residues tyrosine 285–arginine 307 and tyrosine 308–arginine 330. The short motif at lysine 345 to lysine 359 is the Bipartite nuclear localization signal element. Residues asparagine 439–glutamate 661 form a disordered region. A phosphoserine mark is found at serine 440, serine 442, and serine 462. A compositionally biased stretch (basic and acidic residues) spans glutamate 457 to proline 471. Position 470 is a phosphothreonine (threonine 470). Positions glutamate 474–proline 487 are enriched in pro residues. Serine 479 carries the phosphoserine modification. Residue threonine 483 is modified to Phosphothreonine. Residues lysine 488–proline 492 carry the Nuclear localization signal motif. Phosphoserine is present on residues serine 527 and serine 533. The segment covering proline 573–proline 582 has biased composition (acidic residues). A phosphoserine mark is found at serine 589, serine 593, serine 604, and serine 609. Residues alanine 627–glycine 640 show a composition bias toward basic and acidic residues. Residues valine 671–leucine 691 form a helical; Anchor for type IV membrane protein membrane-spanning segment.

It belongs to the junctophilin family. As to quaternary structure, interacts with TRPC3. Interacts with BAG5 and HSPA8; the interaction with HSPA8 is increased in the presence of BAG5. Junctophilin-2 N-terminal fragment: Interacts with MEF2C. In terms of processing, proteolytically cleaved by calpain in response to cardiac stress. The major cleavage site takes place at the C-terminus and leads to the release of the Junctophilin-2 N-terminal fragment chain (JP2NT). Phosphorylation on Ser-165, probably by PKC, affects RYR1-mediated calcium ion release, interaction with TRPC3, and skeletal muscle myotubule development.

The protein resides in the cell membrane. It is found in the sarcoplasmic reticulum membrane. The protein localises to the endoplasmic reticulum membrane. Its subcellular location is the nucleus. Its function is as follows. Membrane-binding protein that provides a structural bridge between the plasma membrane and the sarcoplasmic reticulum and is required for normal excitation-contraction coupling in cardiomyocytes. Provides a structural foundation for functional cross-talk between the cell surface and intracellular Ca(2+) release channels by maintaining the 12-15 nm gap between the sarcolemma and the sarcoplasmic reticulum membranes in the cardiac dyads. Necessary for proper intracellular Ca(2+) signaling in cardiac myocytes via its involvement in ryanodine receptor-mediated calcium ion release. Contributes to the construction of skeletal muscle triad junctions. Transcription repressor required to safeguard against the deleterious effects of cardiac stress. Generated following cleavage of the Junctophilin-2 chain by calpain in response to cardiac stress in cardiomyocytes. Following cleavage and release from the membrane, translocates to the nucleus, binds DNA and represses expression of genes implicated in cell growth and differentiation, hypertrophy, inflammation and fibrosis. Modifies the transcription profile and thereby attenuates pathological remodeling in response to cardiac stress. Probably acts by competing with MEF2 transcription factors and TATA-binding proteins. This chain is Junctophilin-2, found in Rattus norvegicus (Rat).